Here is a 549-residue protein sequence, read N- to C-terminus: Glutamyl-tRNA(Gln) amidotransferase subunit B, mitochondrial (549 aa).

The N-terminal 23 residues, Met1–Tyr23, are a transit peptide targeting the mitochondrion.

Belongs to the GatB/GatE family. GatB subfamily. In terms of assembly, subunit of the heterotrimeric GatFAB amidotransferase (AdT) complex, composed of A, B and F subunits.

The protein localises to the mitochondrion. The catalysed reaction is L-glutamyl-tRNA(Gln) + L-glutamine + ATP + H2O = L-glutaminyl-tRNA(Gln) + L-glutamate + ADP + phosphate + H(+). Functionally, allows the formation of correctly charged Gln-tRNA(Gln) through the transamidation of misacylated Glu-tRNA(Gln) in the mitochondria. The reaction takes place in the presence of glutamine and ATP through an activated gamma-phospho-Glu-tRNA(Gln). The sequence is that of Glutamyl-tRNA(Gln) amidotransferase subunit B, mitochondrial from Yarrowia lipolytica (strain CLIB 122 / E 150) (Yeast).